Here is a 353-residue protein sequence, read N- to C-terminus: DNA integrity scanning protein DisA (353 aa).

A DAC domain is found at 6–144 (DKELMNILKI…GGIKYVLRDS (139 aa)). ATP contacts are provided by residues G73, L91, and 104–108 (TRHRT).

This sequence belongs to the DisA family. In terms of assembly, homooctamer. Requires Mg(2+) as cofactor.

It catalyses the reaction 2 ATP = 3',3'-c-di-AMP + 2 diphosphate. Participates in a DNA-damage check-point that is active prior to asymmetric division when DNA is damaged. DisA forms globular foci that rapidly scan along the chromosomes during sporulation, searching for lesions. When a lesion is present, DisA pauses at the lesion site. This triggers a cellular response that culminates in a temporary block in sporulation initiation. In terms of biological role, also has diadenylate cyclase activity, catalyzing the condensation of 2 ATP molecules into cyclic di-AMP (c-di-AMP). c-di-AMP acts as a signaling molecule that couples DNA integrity with progression of sporulation. The rise in c-di-AMP level generated by DisA while scanning the chromosome, operates as a positive signal that advances sporulation; upon encountering a lesion, the DisA focus arrests at the damaged site and halts c-di-AMP synthesis. The chain is DNA integrity scanning protein DisA from Clostridium botulinum (strain 657 / Type Ba4).